The chain runs to 441 residues: Methionine gamma-lyase (441 aa).

The interval 1 to 25 (MAHFLETQEPLVFSGKKRNDRDDED) is disordered. Lysine 248 carries the post-translational modification N6-(pyridoxal phosphate)lysine.

This sequence belongs to the trans-sulfuration enzymes family. As to quaternary structure, homotetramer. Requires pyridoxal 5'-phosphate as cofactor. Expressed in roots, stems, siliques, leaves, flowers and seeds after imbibition (at protein level). Transcripts accumulate in dry mature seeds, but at protein level, only present upon imbibition.

The protein resides in the cytoplasm. It carries out the reaction L-methionine + H2O = methanethiol + 2-oxobutanoate + NH4(+). Its function is as follows. Catalyzes the degradation of L-methionine to alpha-ketobutyrate, methanethiol and ammonia. Exhibits a high activity toward L-methionine, L-ethionine, L-homocysteine and seleno-L-methionine, but not L-cysteine. Involved in an alternative cysteine biosynthesis pathway to the reverse trans-sulfuration pathway (methionine-&gt;homocysteine-&gt;cystathionine-&gt;cysteine) in which methanethiol is an intermediate. Also mediates an alternative isoleucine biosynthesis pathway in which 2-ketobutyrate is an intermediate. The chain is Methionine gamma-lyase (MGL) from Arabidopsis thaliana (Mouse-ear cress).